Consider the following 297-residue polypeptide: Undecaprenyl-diphosphatase (297 aa).

Transmembrane regions (helical) follow at residues 58 to 78 (PGVA…LSYF), 103 to 123 (AQMG…GLLI), 138 to 158 (LAAI…AEQL), 168 to 188 (LRLA…IPGV), 208 to 228 (AARF…LVEL), 243 to 263 (VLAI…AWLL), and 274 to 294 (FVVY…TGTL).

This sequence belongs to the UppP family.

It is found in the cell inner membrane. It carries out the reaction di-trans,octa-cis-undecaprenyl diphosphate + H2O = di-trans,octa-cis-undecaprenyl phosphate + phosphate + H(+). In terms of biological role, catalyzes the dephosphorylation of undecaprenyl diphosphate (UPP). Confers resistance to bacitracin. The chain is Undecaprenyl-diphosphatase from Synechococcus sp. (strain ATCC 27144 / PCC 6301 / SAUG 1402/1) (Anacystis nidulans).